The following is a 127-amino-acid chain: MRIKGGKQTRVRRKKWLKQASGSFGTRHASYKVAKQTVIQAAKYAYRDRRNKKRDFRSLWILRLNAALREQGMTYSVFINLLKKHNIEINRKVLSELAIKEPSKFNLIVQKVKSEQPKAAKPAALGN.

Belongs to the bacterial ribosomal protein bL20 family.

Functionally, binds directly to 23S ribosomal RNA and is necessary for the in vitro assembly process of the 50S ribosomal subunit. It is not involved in the protein synthesizing functions of that subunit. The sequence is that of Large ribosomal subunit protein bL20 (rplT) from Mycoplasma pneumoniae (strain ATCC 29342 / M129 / Subtype 1) (Mycoplasmoides pneumoniae).